The primary structure comprises 860 residues: DNA mismatch repair protein MutS (860 aa).

606 to 613 (GPNMSGKS) contributes to the ATP binding site.

The protein belongs to the DNA mismatch repair MutS family.

Its function is as follows. This protein is involved in the repair of mismatches in DNA. It is possible that it carries out the mismatch recognition step. This protein has a weak ATPase activity. The chain is DNA mismatch repair protein MutS from Geobacillus sp. (strain WCH70).